The primary structure comprises 122 residues: Large ribosomal subunit protein bL12 (122 aa).

Belongs to the bacterial ribosomal protein bL12 family. In terms of assembly, homodimer. Part of the ribosomal stalk of the 50S ribosomal subunit. Forms a multimeric L10(L12)X complex, where L10 forms an elongated spine to which 2 to 4 L12 dimers bind in a sequential fashion. Binds GTP-bound translation factors.

Forms part of the ribosomal stalk which helps the ribosome interact with GTP-bound translation factors. Is thus essential for accurate translation. The sequence is that of Large ribosomal subunit protein bL12 from Yersinia pseudotuberculosis serotype O:1b (strain IP 31758).